The following is a 256-amino-acid chain: Pimeloyl-[acyl-carrier protein] methyl ester esterase (256 aa).

In terms of domain architecture, AB hydrolase-1 spans 15 to 242 (HLVLLHGWGL…AAHAPFISHP (228 aa)). Substrate contacts are provided by residues tryptophan 22, 82 to 83 (SL), and 143 to 147 (FLALQ). The Nucleophile role is filled by serine 82. Catalysis depends on residues aspartate 207 and histidine 235. Histidine 235 contacts substrate.

This sequence belongs to the AB hydrolase superfamily. Carboxylesterase BioH family. In terms of assembly, monomer.

The protein resides in the cytoplasm. The catalysed reaction is 6-carboxyhexanoyl-[ACP] methyl ester + H2O = 6-carboxyhexanoyl-[ACP] + methanol + H(+). It functions in the pathway cofactor biosynthesis; biotin biosynthesis. In terms of biological role, the physiological role of BioH is to remove the methyl group introduced by BioC when the pimeloyl moiety is complete. It allows to synthesize pimeloyl-ACP via the fatty acid synthetic pathway through the hydrolysis of the ester bonds of pimeloyl-ACP esters. This is Pimeloyl-[acyl-carrier protein] methyl ester esterase from Escherichia coli (strain K12 / MC4100 / BW2952).